The primary structure comprises 249 residues: Ribosomal RNA small subunit methyltransferase J (249 aa).

Asp-169 contacts S-adenosyl-L-methionine.

Belongs to the methyltransferase superfamily. RsmJ family.

It is found in the cytoplasm. The catalysed reaction is guanosine(1516) in 16S rRNA + S-adenosyl-L-methionine = N(2)-methylguanosine(1516) in 16S rRNA + S-adenosyl-L-homocysteine + H(+). Specifically methylates the guanosine in position 1516 of 16S rRNA. This chain is Ribosomal RNA small subunit methyltransferase J, found in Buchnera aphidicola subsp. Schizaphis graminum (strain Sg).